We begin with the raw amino-acid sequence, 46 residues long: Light-harvesting protein B800/850/890 alpha-1 chain (46 aa).

The Cytoplasmic portion of the chain corresponds to 1–12 (MWRLWKLYDPRR). A helical membrane pass occupies residues 13-33 (VLIGIFSWLAVLALVIHFILL). H29 serves as a coordination point for a bacteriochlorophyll. The Periplasmic segment spans residues 34–46 (STDRFNWVGGAAN).

The protein belongs to the antenna complex alpha subunit family. The core complex is formed by different alpha and beta chains, binding bacteriochlorophyll molecules, and arranged most probably in tetrameric structures disposed around the reaction center. The non-pigmented gamma chains may constitute additional components.

Its subcellular location is the cell inner membrane. Its function is as follows. Antenna complexes are light-harvesting systems, which transfer the excitation energy to the reaction centers. This Halorhodospira halophila (strain DSM 244 / SL1) (Ectothiorhodospira halophila (strain DSM 244 / SL1)) protein is Light-harvesting protein B800/850/890 alpha-1 chain.